Reading from the N-terminus, the 158-residue chain is Small ribosomal subunit protein uS7 (158 aa).

It belongs to the universal ribosomal protein uS7 family. As to quaternary structure, part of the 30S ribosomal subunit. Contacts proteins S9 and S11.

In terms of biological role, one of the primary rRNA binding proteins, it binds directly to 16S rRNA where it nucleates assembly of the head domain of the 30S subunit. Is located at the subunit interface close to the decoding center, probably blocks exit of the E-site tRNA. This is Small ribosomal subunit protein uS7 from Azobacteroides pseudotrichonymphae genomovar. CFP2.